A 259-amino-acid polypeptide reads, in one-letter code: Ras-related protein Rab-34 (259 aa).

Methionine 1 bears the N-acetylmethionine mark. GTP is bound by residues serine 62, valine 63, glycine 64, lysine 65, threonine 66, aspartate 78, tyrosine 81, and threonine 84. Threonine 66 contacts Mg(2+). The Switch 1 motif lies at 71–89; it reads RFCKDTFDKNYKATIGVDF. Residues threonine 84 and aspartate 107 each coordinate Mg(2+). The short motif at 108-127 is the Switch 2 element; the sequence is TAGQERFKCIASTYYRGAQA. GTP contacts are provided by glycine 110, lysine 167, aspartate 169, and serine 198. Phosphoserine is present on residues serine 241 and serine 244. 2 S-geranylgeranyl cysteine lipidation sites follow: cysteine 257 and cysteine 258.

The protein belongs to the small GTPase superfamily. Rab family. Interacts with RILP. The GTP-bound form interacts with REP15. The cofactor is Mg(2+).

The protein resides in the cytoplasm. It is found in the golgi apparatus. The protein localises to the cytoplasmic vesicle. It localises to the phagosome. Its subcellular location is the phagosome membrane. The protein resides in the cell projection. It is found in the cilium. The protein localises to the cytoskeleton. It localises to the microtubule organizing center. Its subcellular location is the centrosome. The protein resides in the centriole. It carries out the reaction GTP + H2O = GDP + phosphate + H(+). Regulated by guanine nucleotide exchange factors (GEFs) which promote the exchange of bound GDP for free GTP. Regulated by GTPase activating proteins (GAPs) which increase the GTP hydrolysis activity. Inhibited by GDP dissociation inhibitors (GDIs). Its function is as follows. The small GTPases Rab are key regulators of intracellular membrane trafficking, from the formation of transport vesicles to their fusion with membranes. Rabs cycle between an inactive GDP-bound form and an active GTP-bound form that is able to recruit to membranes different sets of downstream effectors directly responsible for vesicle formation, movement, tethering and fusion. RAB34 transports protein involved in the redistribution of lysosomes to the peri-Golgi region. Plays a role in the maturation of phagosomes that engulf pathogens, such as S.aureus and M.tuberculosis. Plays a role in the fusion of phagosomes with lysosomes. Required for the early steps of intracellular ciliogenesis, the cilium assembly pathway initiated by trafficking and docking of ciliary vesicles to the centrioles in the cytoplasm, followed by axoneme formation in the cytoplasm. After axoneme elongation, the centrioles migrate close to the cell surface so that ciliary vesicles can fuse with the plasma membrane to expose cilia to the extracellular space. It seems dispensable for ciliogenesis via the extracellular pathway where cilium assembly begins after migration and docking of the centriole to the plasma membrane. Also acts as a positive regulator of hedgehog signaling and regulates ciliary function. The sequence is that of Ras-related protein Rab-34 (RAB34) from Sus scrofa (Pig).